A 59-amino-acid polypeptide reads, in one-letter code: Large ribosomal subunit protein bL32 (59 aa).

Belongs to the bacterial ribosomal protein bL32 family.

In Mesoplasma florum (strain ATCC 33453 / NBRC 100688 / NCTC 11704 / L1) (Acholeplasma florum), this protein is Large ribosomal subunit protein bL32.